A 324-amino-acid chain; its full sequence is Sperm acrosome membrane-associated protein 6 (324 aa).

Positions 1–26 are cleaved as a signal peptide; that stretch reads MALLALASAVPSALLALAVFRVPAWA. The short motif at 27–30 is the CXXC motif element; the sequence is CLLC. Disulfide bonds link cysteine 27–cysteine 139, cysteine 30–cysteine 142, cysteine 41–cysteine 55, cysteine 124–cysteine 147, cysteine 128–cysteine 153, and cysteine 170–cysteine 226. The Extracellular portion of the chain corresponds to 27–295; the sequence is CLLCFTTYSE…RPEALTPSNL (269 aa). Positions 139-142 match the CXXC motif motif; it reads CSGC. The region spanning 150-236 is the Ig-like domain; the sequence is PLDCPVQDVT…VIKQDQRPLA (87 aa). Asparagine 243 carries an N-linked (GlcNAc...) asparagine glycan. The helical transmembrane segment at 296 to 316 threads the bilayer; it reads FLLAVLGALASASATVLAWMF. Residues 317 to 324 are Cytoplasmic-facing; sequence FRWYCSGN.

It belongs to the SPACA6 family. Forms a complex with IZUMO1 and TMEM81 on spermatocyte cell membrane required for fertilization. Detected at the sperm head, equatorial region, neck and midpiece (at protein level). Expressed in testis.

It is found in the cytoplasmic vesicle. The protein localises to the secretory vesicle. The protein resides in the acrosome membrane. In terms of biological role, sperm protein required for fusion of sperm with the egg membrane during fertilization. May regulate the expression of sperm surface protein DCST2. The sequence is that of Sperm acrosome membrane-associated protein 6 from Homo sapiens (Human).